The following is a 429-amino-acid chain: Enolase 1 (429 aa).

Gln163 serves as a coordination point for (2R)-2-phosphoglycerate. The active-site Proton donor is Glu205. Residues Asp242, Glu287, and Asp314 each coordinate Mg(2+). (2R)-2-phosphoglycerate is bound by residues Lys339, Arg368, Ser369, and Lys390. The active-site Proton acceptor is the Lys339.

Belongs to the enolase family. The cofactor is Mg(2+).

Its subcellular location is the cytoplasm. The protein localises to the secreted. It localises to the cell surface. It carries out the reaction (2R)-2-phosphoglycerate = phosphoenolpyruvate + H2O. It participates in carbohydrate degradation; glycolysis; pyruvate from D-glyceraldehyde 3-phosphate: step 4/5. Catalyzes the reversible conversion of 2-phosphoglycerate (2-PG) into phosphoenolpyruvate (PEP). It is essential for the degradation of carbohydrates via glycolysis. This chain is Enolase 1, found in Cupriavidus metallidurans (strain ATCC 43123 / DSM 2839 / NBRC 102507 / CH34) (Ralstonia metallidurans).